The chain runs to 605 residues: Glycerophosphodiester phosphodiesterase domain-containing protein 5 (605 aa).

The Cytoplasmic segment spans residues 1–42; the sequence is MVRHQPLQYYEPQLCLSCLTGIYGCRWKRYQRSHDDTTPWER. Intrachain disulfides connect Cys15–Cys18 and Cys25–Cys571. Residues 43–63 traverse the membrane as a helical segment; the sequence is LWFLLLTFTFGLTLTWLYFWW. Residues 64 to 89 are Extracellular-facing; that stretch reads EVHNDYDEFNWYLYNRMGYWSDWPVP. A helical transmembrane segment spans residues 90 to 110; the sequence is ILVTTAAAFAYIAGLLVLALC. The Cytoplasmic segment spans residues 111–125; sequence HIAVGQQMNLHWLHK. A helical transmembrane segment spans residues 126–146; sequence IGLVVILASTVVAMSAVAQLW. Topologically, residues 147–160 are extracellular; that stretch reads EDEWEVLLISLQGT. A helical membrane pass occupies residues 161–181; the sequence is APFLHVGAVAAVTMLSWIVAG. Topologically, residues 182 to 192 are cytoplasmic; it reads QFARAERTSSQ. A helical transmembrane segment spans residues 193 to 213; sequence VTILCTFFTVVFALYLAPLTI. Over 214 to 496 the chain is Extracellular; the sequence is SSPCIMEKKD…PLWIMPPDEY (283 aa). In terms of domain architecture, GP-PDE spans 228–485; that stretch reads PALIGHRGAP…DNSHALSQVP (258 aa). Residues Asn301, Asn336, Asn352, Asn374, and Asn448 are each glycosylated (N-linked (GlcNAc...) asparagine). The chain crosses the membrane as a helical span at residues 497–517; it reads CLMWVTADLVSFTLIVGIFVL. Topologically, residues 518-605 are cytoplasmic; the sequence is QKWRLGGIRS…TKTLIERSGR (88 aa). The tract at residues 582–605 is disordered; sequence STATPVGPRGGGSHTKTLIERSGR.

The protein belongs to the glycerophosphoryl diester phosphodiesterase family. As to quaternary structure, interacts with PRDX1; forms a mixed-disulfide with PRDX1, leading to disrupt intramolecular disulfide bond between Cys-25 and Cys-571. In terms of processing, intramolecular disulfide bond between Cys-25 and Cys-571 is reduced by PRDX1.

The protein localises to the endomembrane system. It is found in the cytoplasm. It localises to the perinuclear region. The protein resides in the cell projection. Its subcellular location is the growth cone. The enzyme catalyses a 1,2-diacyl-sn-glycero-3-phospho-(1D-myo-inositol-4,5-bisphosphate) + H2O = 1D-myo-inositol 1,4,5-trisphosphate + a 1,2-diacyl-sn-glycerol + H(+). It catalyses the reaction sn-glycerol 3-phosphocholine + H2O = sn-glycerol 3-phosphate + choline + H(+). Glycerophosphodiester phosphodiesterase that promotes neurite formation and drives spinal motor neuron differentiation. Mediates the cleavage of glycosylphosphatidylinositol (GPI) anchor of target proteins: removes the GPI-anchor of RECK, leading to release RECK from the plasma membrane. May contribute to the osmotic regulation of cellular glycerophosphocholine. The protein is Glycerophosphodiester phosphodiesterase domain-containing protein 5 of Homo sapiens (Human).